The chain runs to 84 residues: Kunitz/BPTI-like toxin (84 aa).

The first 24 residues, 1-24 (MSSGGLLLLLGLLTLWAELTPVSG), serve as a signal peptide directing secretion. Position 25 is a pyrrolidone carboxylic acid (Q25). The BPTI/Kunitz inhibitor domain maps to 31–81 (CHLPANPGPCRATITRFYYNSDSKQCEKFTYGGCHGNENNFETKDKCHYTC). 3 disulfide bridges follow: C31-C81, C40-C64, and C56-C77.

Its subcellular location is the secreted. Serine protease inhibitor. This chain is Kunitz/BPTI-like toxin, found in Austrelaps superbus (Lowland copperhead snake).